The primary structure comprises 1276 residues: Histone-lysine N-methyltransferase PRDM16 (1276 aa).

Over residues 1-10 (MRSKARARKL) the composition is skewed to basic residues. A disordered region spans residues 1–68 (MRSKARARKL…DFTPKEGSPY (68 aa)). The SET domain maps to 82–211 (ADFELRESSI…PGEELLVHVK (130 aa)). A C2H2-type 1; atypical zinc finger spans residues 230–253 (FRCDECDELFQSKLDLRRHKKYTC). C2H2-type zinc fingers lie at residues 281–303 (HECK…MVIH), 309–331 (YKCD…QMSH), 337–360 (FECE…RSQH), 366–388 (HACP…KHIH), and 394–416 (FICE…KRMH). The C2H2-type 7; atypical zinc finger occupies 423–445 (IKCKDCGQMFSTTSSLNKHRRFC). 2 disordered regions span residues 533–657 (SLLK…APPG) and 772–804 (PFDL…QPLD). A compositionally biased stretch (polar residues) spans 561-570 (AVSNSSQGTT). Over residues 575–597 (PEEKFESRLEDSCVEKLKTRSSD) the composition is skewed to basic and acidic residues. Over residues 609–624 (TTTGTDLDTTTGTGSD) the composition is skewed to low complexity. Positions 632–642 (DPDKDKGKGKS) are enriched in basic and acidic residues. The interaction with CTBP1, CTBP2 and ZNF516 stretch occupies residues 679–1038 (DEQLLTATGA…KHEHENAPVS (360 aa)). Residues 739–1276 (PFTDRALAHN…SGAFHPINHL (538 aa)) are mediates interaction with SKI and regulation of TGF-beta signaling. 3 consecutive C2H2-type zinc fingers follow at residues 951 to 973 (YTCR…LRTH), 979 to 1002 (YRCK…RNIH), and 1008 to 1032 (FKCH…KHEH). Disordered regions lie at residues 1033 to 1065 (ENAP…HALL) and 1105 to 1163 (AQCP…EPAA). A compositionally biased stretch (polar residues) spans 1047–1058 (HLGTSASSPTSE). A compositionally biased stretch (acidic residues) spans 1116–1133 (EDVEEEDDDDLEEDDEDS).

This sequence belongs to the PRDM16 family. As to quaternary structure, interacts with CEBPA, CEBPB and CEBPD; the interaction is direct. Interacts with PPARG and PPARA; controls brown adipocytes differentiation. Interacts with CTBP1 and CTBP2; represses the expression of WAT-specific genes. Interacts with PPARGC1A and PPARGC1B; interaction with PPARGC1A or PPARGC1B activates the transcription of BAT-specific gene. Interacts with HDAC1, SKI, SMAD2 and SMAD3; the interaction with SKI promotes the recruitment of SMAD3-HDAC1 complex on the promoter of TGF-beta target genes. Interacts with ZNF516; the interaction is direct and may play a role in the transcription of brown adipose tissue-specific gene. Expressed in uterus and kidney. Expressed in both cardiomyocytes and interstitial cells.

The protein resides in the nucleus. The protein localises to the cytoplasm. It carries out the reaction L-lysyl(9)-[histone H3] + S-adenosyl-L-methionine = N(6)-methyl-L-lysyl(9)-[histone H3] + S-adenosyl-L-homocysteine + H(+). In terms of biological role, binds DNA and functions as a transcriptional regulator. Displays histone methyltransferase activity and monomethylates 'Lys-9' of histone H3 (H3K9me1) in vitro. Probably catalyzes the monomethylation of free histone H3 in the cytoplasm which is then transported to the nucleus and incorporated into nucleosomes where SUV39H methyltransferases use it as a substrate to catalyze histone H3 'Lys-9' trimethylation. Likely to be one of the primary histone methyltransferases along with MECOM/PRDM3 that direct cytoplasmic H3K9me1 methylation. Functions in the differentiation of brown adipose tissue (BAT) which is specialized in dissipating chemical energy in the form of heat in response to cold or excess feeding while white adipose tissue (WAT) is specialized in the storage of excess energy and the control of systemic metabolism. Together with CEBPB, regulates the differentiation of myoblastic precursors into brown adipose cells. Functions as a repressor of TGF-beta signaling. Its function is as follows. Binds DNA and functions as a transcriptional regulator. Functions as a repressor of TGF-beta signaling. May regulate granulocyte differentiation. The protein is Histone-lysine N-methyltransferase PRDM16 of Homo sapiens (Human).